A 419-amino-acid chain; its full sequence is S-adenosylmethionine synthase (419 aa).

Residue H15 participates in ATP binding. Residue D17 coordinates Mg(2+). E43 lines the K(+) pocket. E56 and Q99 together coordinate L-methionine. Residues 99-109 (QSPEIAQGVSC) form a flexible loop region. ATP is bound by residues 173 to 175 (DGK), 253 to 254 (RF), D262, 268 to 269 (RK), A285, and K289. D262 provides a ligand contact to L-methionine. Residue K293 participates in L-methionine binding.

The protein belongs to the AdoMet synthase family. In terms of assembly, homotetramer; dimer of dimers. It depends on Mg(2+) as a cofactor. K(+) serves as cofactor.

It localises to the cytoplasm. It carries out the reaction L-methionine + ATP + H2O = S-adenosyl-L-methionine + phosphate + diphosphate. It participates in amino-acid biosynthesis; S-adenosyl-L-methionine biosynthesis; S-adenosyl-L-methionine from L-methionine: step 1/1. Catalyzes the formation of S-adenosylmethionine (AdoMet) from methionine and ATP. The overall synthetic reaction is composed of two sequential steps, AdoMet formation and the subsequent tripolyphosphate hydrolysis which occurs prior to release of AdoMet from the enzyme. In Gloeobacter violaceus (strain ATCC 29082 / PCC 7421), this protein is S-adenosylmethionine synthase.